We begin with the raw amino-acid sequence, 214 residues long: tRNA (guanine-N(7)-)-methyltransferase (214 aa).

S-adenosyl-L-methionine is bound by residues Glu44, Glu69, Asp96, and Asp118. Asp118 is a catalytic residue. Lys122 provides a ligand contact to substrate. The tract at residues 124–129 is interaction with RNA; sequence RHEKRR. Residues Asp154 and 192-195 contribute to the substrate site; that span reads TEYE.

The protein belongs to the class I-like SAM-binding methyltransferase superfamily. TrmB family.

The enzyme catalyses guanosine(46) in tRNA + S-adenosyl-L-methionine = N(7)-methylguanosine(46) in tRNA + S-adenosyl-L-homocysteine. The protein operates within tRNA modification; N(7)-methylguanine-tRNA biosynthesis. Its function is as follows. Catalyzes the formation of N(7)-methylguanine at position 46 (m7G46) in tRNA. This is tRNA (guanine-N(7)-)-methyltransferase from Lacticaseibacillus casei (strain BL23) (Lactobacillus casei).